We begin with the raw amino-acid sequence, 314 residues long: Endolytic peptidoglycan transglycosylase RlpA (314 aa).

An N-terminal signal peptide occupies residues 1 to 19 (MGWALKKVCFLGVIFLISA). Cys-20 carries N-palmitoyl cysteine lipidation. The S-diacylglycerol cysteine moiety is linked to residue Cys-20. Residues 241–314 (SVSGGKFSLQ…YNQNAVLTRE (74 aa)) enclose the SPOR domain.

Belongs to the RlpA family.

It localises to the cell membrane. Its function is as follows. Lytic transglycosylase with a strong preference for naked glycan strands that lack stem peptides. This is Endolytic peptidoglycan transglycosylase RlpA from Helicobacter pylori (strain J99 / ATCC 700824) (Campylobacter pylori J99).